Here is a 449-residue protein sequence, read N- to C-terminus: Serine--tRNA ligase (449 aa).

Threonine 256–glutamate 258 contributes to the L-serine binding site. Position 287–289 (arginine 287–glutamate 289) interacts with ATP. Glutamate 310 contributes to the L-serine binding site. Position 374–377 (glutamate 374–serine 377) interacts with ATP. Serine 410 lines the L-serine pocket.

It belongs to the class-II aminoacyl-tRNA synthetase family. Type-1 seryl-tRNA synthetase subfamily. In terms of assembly, homodimer. The tRNA molecule binds across the dimer.

It is found in the cytoplasm. The enzyme catalyses tRNA(Ser) + L-serine + ATP = L-seryl-tRNA(Ser) + AMP + diphosphate + H(+). It carries out the reaction tRNA(Sec) + L-serine + ATP = L-seryl-tRNA(Sec) + AMP + diphosphate + H(+). Its pathway is aminoacyl-tRNA biosynthesis; selenocysteinyl-tRNA(Sec) biosynthesis; L-seryl-tRNA(Sec) from L-serine and tRNA(Sec): step 1/1. Catalyzes the attachment of serine to tRNA(Ser). Is also able to aminoacylate tRNA(Sec) with serine, to form the misacylated tRNA L-seryl-tRNA(Sec), which will be further converted into selenocysteinyl-tRNA(Sec). This is Serine--tRNA ligase from Xanthomonas oryzae pv. oryzae (strain MAFF 311018).